The primary structure comprises 194 residues: MREATVERATAETWVWLRLGLDGPTGGKVDTGLPFLDHMLLQLQRHGRFLLEVEARGDLEVDVHHLVEDVGIALGMALKEALGDGVGLERYAEAFAPMDETLVLCVLDLSGRPHLEFRPEAWPVVGEAGGVNHYHLREFLRGLVNHGRLTLHLRLLSGREAHHVVEASFKALARALHKATRRTGEGVPSTKGVL.

This sequence belongs to the imidazoleglycerol-phosphate dehydratase family.

It localises to the cytoplasm. The enzyme catalyses D-erythro-1-(imidazol-4-yl)glycerol 3-phosphate = 3-(imidazol-4-yl)-2-oxopropyl phosphate + H2O. Its pathway is amino-acid biosynthesis; L-histidine biosynthesis; L-histidine from 5-phospho-alpha-D-ribose 1-diphosphate: step 6/9. The sequence is that of Imidazoleglycerol-phosphate dehydratase from Thermus thermophilus (strain ATCC 27634 / DSM 579 / HB8).